The chain runs to 174 residues: Adenylate kinase (174 aa).

An NMP region spans residues 12-41 (STGDMLRAAIKAGTPLGLEAKKIIDEGGLV). Residues threonine 13, arginine 18, 39–41 (GLV), 67–70 (GFPR), and glutamine 74 contribute to the AMP site. Residues 104-141 (GRRVHLASGRTYHIAYNPPKVEGKDDVTGEDLIQRDDD) are LID. ATP contacts are provided by residues arginine 105 and 114-115 (TY). The AMP site is built by arginine 138 and arginine 149.

The protein belongs to the adenylate kinase family. As to quaternary structure, monomer.

It localises to the cytoplasm. The catalysed reaction is AMP + ATP = 2 ADP. It functions in the pathway purine metabolism; AMP biosynthesis via salvage pathway; AMP from ADP: step 1/1. In terms of biological role, catalyzes the reversible transfer of the terminal phosphate group between ATP and AMP. Plays an important role in cellular energy homeostasis and in adenine nucleotide metabolism. This is Adenylate kinase from Neisseria animalis.